We begin with the raw amino-acid sequence, 533 residues long: 2,3-bisphosphoglycerate-independent phosphoglycerate mutase (533 aa).

Residues Asp15 and Ser65 each coordinate Mn(2+). Ser65 acts as the Phosphoserine intermediate in catalysis. Substrate contacts are provided by residues His126, 156–157 (RD), Arg188, Arg194, 258–261 (RPDR), and Lys331. Positions 398, 402, 439, 440, and 457 each coordinate Mn(2+).

This sequence belongs to the BPG-independent phosphoglycerate mutase family. In terms of assembly, monomer. Mn(2+) is required as a cofactor.

It catalyses the reaction (2R)-2-phosphoglycerate = (2R)-3-phosphoglycerate. It participates in carbohydrate degradation; glycolysis; pyruvate from D-glyceraldehyde 3-phosphate: step 3/5. In terms of biological role, catalyzes the interconversion of 2-phosphoglycerate and 3-phosphoglycerate. This is 2,3-bisphosphoglycerate-independent phosphoglycerate mutase from Nostoc sp. (strain PCC 7120 / SAG 25.82 / UTEX 2576).